The primary structure comprises 114 residues: Small ribosomal subunit protein bS6 (114 aa).

It belongs to the bacterial ribosomal protein bS6 family.

Binds together with bS18 to 16S ribosomal RNA. The chain is Small ribosomal subunit protein bS6 from Phocaeicola vulgatus (strain ATCC 8482 / DSM 1447 / JCM 5826 / CCUG 4940 / NBRC 14291 / NCTC 11154) (Bacteroides vulgatus).